The following is a 544-amino-acid chain: Chromosomal replication initiator protein DnaA (544 aa).

Residues 1–71 (MNDFWQHCSA…ADMARDFWHT (71 aa)) form a domain I, interacts with DnaA modulators region. The tract at residues 71–207 (TPIDVQFVLD…GETDSMYERS (137 aa)) is domain II. The segment covering 90–105 (AAAPAPASARPASAPG) has biased composition (low complexity). Disordered stretches follow at residues 90-111 (AAAPAPASARPASAPGSMGGSA) and 180-203 (AAARRTWRPGQSAGSNGNGETDSM). The span at 191 to 200 (SAGSNGNGET) shows a compositional bias: polar residues. The interval 208–424 (KLNPVLTFDN…GALRKILAYS (217 aa)) is domain III, AAA+ region. ATP is bound by residues Gly-252, Gly-254, Lys-255, and Thr-256. The interval 425-544 (KFHGREITIE…LHVLEQTLKG (120 aa)) is domain IV, binds dsDNA.

The protein belongs to the DnaA family. As to quaternary structure, oligomerizes as a right-handed, spiral filament on DNA at oriC.

It localises to the cytoplasm. In terms of biological role, plays an essential role in the initiation and regulation of chromosomal replication. ATP-DnaA binds to the origin of replication (oriC) to initiate formation of the DNA replication initiation complex once per cell cycle. Binds the DnaA box (a 9 base pair repeat at the origin) and separates the double-stranded (ds)DNA. Forms a right-handed helical filament on oriC DNA; dsDNA binds to the exterior of the filament while single-stranded (ss)DNA is stabiized in the filament's interior. The ATP-DnaA-oriC complex binds and stabilizes one strand of the AT-rich DNA unwinding element (DUE), permitting loading of DNA polymerase. After initiation quickly degrades to an ADP-DnaA complex that is not apt for DNA replication. Binds acidic phospholipids. This chain is Chromosomal replication initiator protein DnaA, found in Paraburkholderia xenovorans (strain LB400).